A 323-amino-acid chain; its full sequence is Glyoxylate/hydroxypyruvate reductase HPR3 (323 aa).

Residues 160–163 (LGSI), 182–184 (SRS), and 238–240 (VGR) contribute to the NADP(+) site. Catalysis depends on residues Arg-240 and Glu-269. Catalysis depends on His-287, which acts as the Proton donor. 287–289 (HFA) is an NADP(+) binding site.

This sequence belongs to the D-isomer specific 2-hydroxyacid dehydrogenase family. GyaR subfamily. As to quaternary structure, homodimer.

It catalyses the reaction glycolate + NADP(+) = glyoxylate + NADPH + H(+). It carries out the reaction (R)-glycerate + NADP(+) = 3-hydroxypyruvate + NADPH + H(+). Its activity is regulated as follows. Inhibited by oxalate. Catalyzes the NADPH-dependent reduction of glyoxylate and hydroxypyruvate (HP) into glycolate and glycerate. Mostly active in the presence of NADPH and glyoxylate. In Arabidopsis thaliana (Mouse-ear cress), this protein is Glyoxylate/hydroxypyruvate reductase HPR3 (HPR3).